A 363-amino-acid chain; its full sequence is UDP-N-acetylglucosamine--N-acetylmuramyl-(pentapeptide) pyrophosphoryl-undecaprenol N-acetylglucosamine transferase (363 aa).

Residues 14–16 (TGG), N122, R163, S190, and Q285 contribute to the UDP-N-acetyl-alpha-D-glucosamine site.

Belongs to the glycosyltransferase 28 family. MurG subfamily.

It is found in the cell inner membrane. The enzyme catalyses di-trans,octa-cis-undecaprenyl diphospho-N-acetyl-alpha-D-muramoyl-L-alanyl-D-glutamyl-meso-2,6-diaminopimeloyl-D-alanyl-D-alanine + UDP-N-acetyl-alpha-D-glucosamine = di-trans,octa-cis-undecaprenyl diphospho-[N-acetyl-alpha-D-glucosaminyl-(1-&gt;4)]-N-acetyl-alpha-D-muramoyl-L-alanyl-D-glutamyl-meso-2,6-diaminopimeloyl-D-alanyl-D-alanine + UDP + H(+). Its pathway is cell wall biogenesis; peptidoglycan biosynthesis. Functionally, cell wall formation. Catalyzes the transfer of a GlcNAc subunit on undecaprenyl-pyrophosphoryl-MurNAc-pentapeptide (lipid intermediate I) to form undecaprenyl-pyrophosphoryl-MurNAc-(pentapeptide)GlcNAc (lipid intermediate II). This Prochlorococcus marinus (strain MIT 9312) protein is UDP-N-acetylglucosamine--N-acetylmuramyl-(pentapeptide) pyrophosphoryl-undecaprenol N-acetylglucosamine transferase.